A 337-amino-acid chain; its full sequence is Mortality factor related protein 1 (337 aa).

One can recognise a Tudor-knot domain in the interval 7 to 55 (FEVGENVACIYKGKPYDAKITDIKTNSDGKELYCVHFKGWNNRYDEKIP). A disordered region spans residues 75 to 113 (HNAELPTTALKPKKKSLAAEAPRDDRDDTPGTSKGKKAK). The MRG domain occupies 122–327 (TADDMKVELP…ASNDYYRRSL (206 aa)).

Component of the SIN3S complex, which contains at least sin-3, hda-1, athp-1 and mrg-1. Interacts with cfp-1, a component of the SET2 complex. Interacts with rfp-1. As to expression, expressed in oocytes (at protein level). Expressed mainly in germ cells, but also at lower levels in several somatic cell types, including intestinal cells.

The protein localises to the nucleus. It is found in the chromosome. Protein involved in the remodeling of chromatin thereby regulating various processes including transcription, chromosome synapsis and genome integrity. Mainly binds genomic loci carrying trimethylated histone H3 'Lys-36' (H3K36me3) or 'Lys-4' (H3K4me3), and acetylated histone H3 'Lys-9' (H3K9ac), 'Lys-27' (H3K27ac). During meiosis, required for the presynaptic pairing of homologous chromosomal regions outside of the pairing center and for the progression of chromosome synapsis. Essential maternal factor required in postembryonic germline development and in maintaining germ cell identity. Plays an important role in maintaining genomic integrity in primordial germ cells (PGCs) during meiosis by regulating DNA double-strand break (DSB) repair and synapsis. Also, required for chromatin-based transcriptional silencing in PGCs and for silencing of X-linked genes in the maternal germ line. By retaining histone acetyltransferase, cbp-1, in euchromatin, promotes the anchoring of heterochromatin at the inner nuclear membrane in intestinal and hypodermal cells. This Caenorhabditis elegans protein is Mortality factor related protein 1.